Reading from the N-terminus, the 175-residue chain is Cuticle protein 16.5, isoform A (175 aa).

19 repeat units span residues 17–20 (AAPA), 25–28 (AAPA), 31–34 (AAPA), 38–41 (AAPA), 44–47 (AAPA), 51–54 (AAPA), 57–60 (AAPA), 64–67 (AAPA), 70–73 (AAPA), 77–80 (AAPA), 83–86 (AAPA), 91–94 (AAPA), 99–102 (AAPA), 106–109 (AAPA), 134–137 (AAPA), 144–147 (AAPA), 151–154 (AAPA), 158–161 (AAPA), and 165–168 (AAPA).

Functionally, component of the cuticle of migratory locust which contains more than 100 different structural proteins. The chain is Cuticle protein 16.5, isoform A from Locusta migratoria (Migratory locust).